A 435-amino-acid polypeptide reads, in one-letter code: Serine--tRNA ligase (435 aa).

238–240 (TAE) is a binding site for L-serine. 269-271 (RKE) provides a ligand contact to ATP. Residue E292 participates in L-serine binding. Position 356–359 (356–359 (EISS)) interacts with ATP. S391 is an L-serine binding site.

Belongs to the class-II aminoacyl-tRNA synthetase family. Type-1 seryl-tRNA synthetase subfamily. As to quaternary structure, homodimer. The tRNA molecule binds across the dimer.

The protein resides in the cytoplasm. The enzyme catalyses tRNA(Ser) + L-serine + ATP = L-seryl-tRNA(Ser) + AMP + diphosphate + H(+). It catalyses the reaction tRNA(Sec) + L-serine + ATP = L-seryl-tRNA(Sec) + AMP + diphosphate + H(+). It participates in aminoacyl-tRNA biosynthesis; selenocysteinyl-tRNA(Sec) biosynthesis; L-seryl-tRNA(Sec) from L-serine and tRNA(Sec): step 1/1. Functionally, catalyzes the attachment of serine to tRNA(Ser). Is also able to aminoacylate tRNA(Sec) with serine, to form the misacylated tRNA L-seryl-tRNA(Sec), which will be further converted into selenocysteinyl-tRNA(Sec). This Leuconostoc mesenteroides subsp. mesenteroides (strain ATCC 8293 / DSM 20343 / BCRC 11652 / CCM 1803 / JCM 6124 / NCDO 523 / NBRC 100496 / NCIMB 8023 / NCTC 12954 / NRRL B-1118 / 37Y) protein is Serine--tRNA ligase.